Here is a 433-residue protein sequence, read N- to C-terminus: Meiotically up-regulated gene 131 protein (433 aa).

Polar residues predominate over residues Leu-401 to Leu-412. Residues Leu-401 to Ala-433 form a disordered region.

This sequence belongs to the UPF0300 family.

The protein localises to the golgi apparatus. Has a role in meiosis. The chain is Meiotically up-regulated gene 131 protein (mug131) from Schizosaccharomyces pombe (strain 972 / ATCC 24843) (Fission yeast).